A 316-amino-acid chain; its full sequence is Pantothenate kinase (316 aa).

Residue 95–102 (GSVAVGKS) coordinates ATP.

It belongs to the prokaryotic pantothenate kinase family.

The protein resides in the cytoplasm. The enzyme catalyses (R)-pantothenate + ATP = (R)-4'-phosphopantothenate + ADP + H(+). The protein operates within cofactor biosynthesis; coenzyme A biosynthesis; CoA from (R)-pantothenate: step 1/5. The protein is Pantothenate kinase of Escherichia coli O17:K52:H18 (strain UMN026 / ExPEC).